The chain runs to 3078 residues: Probable polyketide synthase 34 (3078 aa).

Residues 28–462 (SGDVAVIGIG…GSNVCLILSE (435 aa)) enclose the Ketosynthase family 3 (KS3) domain. Residues Cys-200, His-339, and His-385 each act as for beta-ketoacyl synthase activity in the active site. The acyl/malonyl transferase stretch occupies residues 665–698 (GVSADIIIGHSLGEISSSYCSGIIDFQTLCYLTY). Ser-675 functions as the For acyl/malonyl transferase activity in the catalytic mechanism. An N-terminal hotdog fold region spans residues 954 to 1083 (HEKIKNEGPS…GNFSLTKHNI (130 aa)). The 311-residue stretch at 954-1264 (HEKIKNEGPS…CTIVGSNPDS (311 aa)) folds into the PKS/mFAS DH domain. The active-site Proton acceptor; for dehydratase activity is the His-995. Residues 1099-1264 (NFTSISKQDL…CTIVGSNPDS (166 aa)) form a C-terminal hotdog fold region. The active-site Proton donor; for dehydratase activity is the Asp-1171. The interval 1375-1396 (NINNNNNNNNNNNNNNNNNSNG) is disordered. Positions 2541–2618 (DNNEIIRSTI…QSIEIIKSAH (78 aa)) constitute a Carrier domain. At Ser-2578 the chain carries O-(pantetheine 4'-phosphoryl)serine. Disordered regions lie at residues 2617-2640 (AHNN…NNNN) and 2739-2761 (NKGS…DNNS). Residues 2619–2640 (NNNNNNNNNNNNNNNNNNNNNN) are compositionally biased toward low complexity. A coiled-coil region spans residues 2621 to 2652 (NNNNNNNNNNNNNNNNNNNNLVKKEQQSLDEF).

Requires pantetheine 4'-phosphate as cofactor.

Probable polyketide synthase. This chain is Probable polyketide synthase 34 (pks34), found in Dictyostelium discoideum (Social amoeba).